Consider the following 123-residue polypeptide: uncharacterized protein (123 aa).

The disordered stretch occupies residues 17-74 (FQKKKKTGSQTRRTLKPQPQQLQQNLPKGHETTGHTYERVLQQQGSQERSPGLMSEDS). Position 30 is a phosphothreonine (T30). Residues 32–43 (KPQPQQLQQNLP) show a composition bias toward low complexity. Over residues 44–54 (KGHETTGHTYE) the composition is skewed to basic and acidic residues. S62 is modified (phosphoserine).

This is an uncharacterized protein from Homo sapiens (Human).